A 167-amino-acid polypeptide reads, in one-letter code: Phosphopantetheine adenylyltransferase (167 aa).

Position 13 (threonine 13) interacts with substrate. ATP-binding positions include 13 to 14 and histidine 21; that span reads TF. 3 residues coordinate substrate: lysine 45, leucine 78, and arginine 92. Residues 93-95, glutamate 103, and 128-134 each bind ATP; these read GLR and TQFISSS.

The protein belongs to the bacterial CoaD family. In terms of assembly, homohexamer. Requires Mg(2+) as cofactor.

The protein localises to the cytoplasm. It catalyses the reaction (R)-4'-phosphopantetheine + ATP + H(+) = 3'-dephospho-CoA + diphosphate. Its pathway is cofactor biosynthesis; coenzyme A biosynthesis; CoA from (R)-pantothenate: step 4/5. Reversibly transfers an adenylyl group from ATP to 4'-phosphopantetheine, yielding dephospho-CoA (dPCoA) and pyrophosphate. The protein is Phosphopantetheine adenylyltransferase of Wolbachia sp. subsp. Brugia malayi (strain TRS).